Here is a 127-residue protein sequence, read N- to C-terminus: MARVGAKSSGAGAKKKGVSFVIDCSKPVDDTILEIATLEKFLQERIKVRGKAGALGNSVSITRYNGKINVNANSNFSKRYLKYLTKKYLKKYNLRDWLRVIASNKDKNVYEVRYFRIDDEVASYEED.

The protein belongs to the eukaryotic ribosomal protein eL22 family.

In Arabidopsis thaliana (Mouse-ear cress), this protein is Large ribosomal subunit protein eL22x (RPL22A).